The following is a 254-amino-acid chain: Triosephosphate isomerase (254 aa).

Residue 9-11 coordinates substrate; the sequence is NWK. Histidine 96 functions as the Electrophile in the catalytic mechanism. The active-site Proton acceptor is glutamate 169. Residues glycine 175, serine 215, and 236-237 each bind substrate; that span reads GG.

This sequence belongs to the triosephosphate isomerase family. As to quaternary structure, homodimer.

The protein localises to the cytoplasm. The catalysed reaction is D-glyceraldehyde 3-phosphate = dihydroxyacetone phosphate. It participates in carbohydrate biosynthesis; gluconeogenesis. Its pathway is carbohydrate degradation; glycolysis; D-glyceraldehyde 3-phosphate from glycerone phosphate: step 1/1. Its function is as follows. Involved in the gluconeogenesis. Catalyzes stereospecifically the conversion of dihydroxyacetone phosphate (DHAP) to D-glyceraldehyde-3-phosphate (G3P). This chain is Triosephosphate isomerase, found in Borrelia hermsii (strain HS1 / DAH).